Reading from the N-terminus, the 793-residue chain is Phenylalanine--tRNA ligase beta subunit (793 aa).

Residues 39-154 form the tRNA-binding domain; that stretch reads TCSFSSIITA…ENTPLGESAC (116 aa). Residues 403 to 481 enclose the B5 domain; sequence PQASTLSFRT…QPWKVENKKA (79 aa). Residues aspartate 457, aspartate 463, glutamate 466, and glutamate 467 each contribute to the Mg(2+) site. An FDX-ACB domain is found at 697 to 793; it reads PIYPSSFRDI…QINDTKGTID (97 aa).

This sequence belongs to the phenylalanyl-tRNA synthetase beta subunit family. Type 1 subfamily. In terms of assembly, tetramer of two alpha and two beta subunits. Requires Mg(2+) as cofactor.

The protein resides in the cytoplasm. It catalyses the reaction tRNA(Phe) + L-phenylalanine + ATP = L-phenylalanyl-tRNA(Phe) + AMP + diphosphate + H(+). This is Phenylalanine--tRNA ligase beta subunit from Chlamydia caviae (strain ATCC VR-813 / DSM 19441 / 03DC25 / GPIC) (Chlamydophila caviae).